The chain runs to 385 residues: Glucans biosynthesis protein C (385 aa).

The next 10 helical transmembrane spans lie at 17–37 (AWLM…SHTW), 60–80 (MQVF…RYPL), 91–111 (VGIP…IMLQ), 137–157 (ISHL…VWIF), 173–193 (KFSM…YAVI), 212–232 (FIVM…LAFI), 239–259 (LFTT…VAYL), 274–294 (TESV…FSFG), 311–331 (ASLF…AYIT), and 338–358 (WLGF…LYEI).

The protein belongs to the acyltransferase 3 family. OpgC subfamily.

Its subcellular location is the cell membrane. The protein operates within glycan metabolism; osmoregulated periplasmic glucan (OPG) biosynthesis. In terms of biological role, necessary for the succinyl substitution of periplasmic glucans. Could catalyze the transfer of succinyl residues from the cytoplasmic side of the membrane to the nascent glucan backbones on the periplasmic side of the membrane. In Escherichia coli O45:K1 (strain S88 / ExPEC), this protein is Glucans biosynthesis protein C.